Reading from the N-terminus, the 986-residue chain is Translation initiation factor IF-2 (986 aa).

A disordered region spans residues 95-394 (TFVRRDETSA…GRGKHQDQNT (300 aa)). Basic and acidic residues predominate over residues 122–182 (ELQRREEEAR…EEEAAKKRAA (61 aa)). The span at 183–222 (AEAAAREQAQAAKPAQAAQPAAAKAEPVAAKAAEPAVAKQ) shows a compositional bias: low complexity. The span at 228-277 (ERAAAERAAQREAAKKAEDAARQAAEKARAEQEQIAKRRAAAEAEARAIR) shows a compositional bias: basic and acidic residues. Residues 320 to 342 (APSRPAAKKPAAAAPAATTTPSA) show a composition bias toward low complexity. Positions 371 to 384 (TSGGVDRGWRGGPK) are enriched in gly residues. Residues 486 to 655 (PRPPVVTVMG…LLQAEVLELK (170 aa)) enclose the tr-type G domain. The tract at residues 495–502 (GHVDHGKT) is G1. 495-502 (GHVDHGKT) serves as a coordination point for GTP. Residues 520 to 524 (GITQH) form a G2 region. The G3 stretch occupies residues 541 to 544 (DTPG). GTP is bound by residues 541-545 (DTPGH) and 595-598 (NKID). The G4 stretch occupies residues 595-598 (NKID). The tract at residues 631 to 633 (SAK) is G5.

This sequence belongs to the TRAFAC class translation factor GTPase superfamily. Classic translation factor GTPase family. IF-2 subfamily.

It is found in the cytoplasm. Its function is as follows. One of the essential components for the initiation of protein synthesis. Protects formylmethionyl-tRNA from spontaneous hydrolysis and promotes its binding to the 30S ribosomal subunits. Also involved in the hydrolysis of GTP during the formation of the 70S ribosomal complex. The chain is Translation initiation factor IF-2 from Paraburkholderia phytofirmans (strain DSM 17436 / LMG 22146 / PsJN) (Burkholderia phytofirmans).